The chain runs to 355 residues: Trans-3-hydroxy-L-proline dehydratase (355 aa).

Catalysis depends on Cys-111, which acts as the Proton acceptor. Residues 112 to 113 (GH) and 276 to 277 (GS) each bind substrate.

It belongs to the proline racemase family. In terms of assembly, homodimer.

The catalysed reaction is trans-3-hydroxy-L-proline = 1-pyrroline-2-carboxylate + H2O. Functionally, catalyzes the dehydration of trans-3-hydroxy-L-proline (t3LHyp) to Delta(1)-pyrroline-2-carboxylate (Pyr2C). Together with LhpI, is involved in a metabolic pathway that converts t3LHyp to L-proline. This chain is Trans-3-hydroxy-L-proline dehydratase, found in Colwellia psychrerythraea (strain 34H / ATCC BAA-681) (Vibrio psychroerythus).